The following is a 152-amino-acid chain: Nucleoside diphosphate kinase A (152 aa).

ATP contacts are provided by K12, F60, R88, and T94. K100 participates in a covalent cross-link: Glycyl lysine isopeptide (Lys-Gly) (interchain with G-Cter in ubiquitin). ATP is bound by residues R105 and N115. The active-site Pros-phosphohistidine intermediate is H118. A phosphoserine mark is found at S120, S122, and S125.

The protein belongs to the NDK family. As to quaternary structure, hexamer of two different chains: An and B (A6, A5B, A4B2, A3B3, A2B4, AB5, B6). Interacts with PRUNE1. Component of the SET complex, composed of at least ANP32A, APEX1, HMGB2, NME1, SET and TREX1. Within this complex, interacts directly with SET. Also interacts with TREX1, but only following translocation to the nucleus. The cofactor is Mg(2+).

Its subcellular location is the cytoplasm. It localises to the nucleus. It catalyses the reaction a 2'-deoxyribonucleoside 5'-diphosphate + ATP = a 2'-deoxyribonucleoside 5'-triphosphate + ADP. It carries out the reaction a ribonucleoside 5'-diphosphate + ATP = a ribonucleoside 5'-triphosphate + ADP. Its activity is regulated as follows. Autophosphorylation at His-118 increases serine/threonine protein kinase activity of the enzyme. Interaction with the SET complex inhibits exonuclease activity. Its function is as follows. Major role in the synthesis of nucleoside triphosphates other than ATP. The ATP gamma phosphate is transferred to the NDP beta phosphate via a ping-pong mechanism, using a phosphorylated active-site intermediate. Possesses nucleoside-diphosphate kinase, serine/threonine-specific protein kinase, geranyl and farnesyl pyrophosphate kinase, histidine protein kinase and 3'-5' exonuclease activities. Involved in cell proliferation, differentiation and development, signal transduction, G protein-coupled receptor endocytosis, and gene expression. Required for neural development including neural patterning and cell fate determination. During GZMA-mediated cell death, works in concert with TREX1. NME1 nicks one strand of DNA and TREX1 removes bases from the free 3' end to enhance DNA damage and prevent DNA end reannealing and rapid repair. This Rattus norvegicus (Rat) protein is Nucleoside diphosphate kinase A (Nme1).